Here is an 87-residue protein sequence, read N- to C-terminus: Kappa-bungarotoxin (87 aa).

Positions 1–21 (MKTLLLTLVVVTIVCLDLGYT) are cleaved as a signal peptide. 5 disulfide bridges follow: C24–C42, C35–C63, C48–C52, C67–C79, and C80–C85.

This sequence belongs to the three-finger toxin family. Long-chain subfamily. Kappa-neurotoxin sub-subfamily. Homodimer and heterodimer; non-covalently linked. In terms of tissue distribution, expressed by the venom gland.

The protein resides in the secreted. Functionally, postsynaptic neurotoxin that binds and inhibits neuronal nicotinic acetylcholine receptors (nAChR) with high affinity (IC(50)&lt;100 nM). Is a selective, and slowly reversible antagonist of alpha-3/CHRNA3-containing and some alpha-4/CHRNA4-containing AChRs. This chain is Kappa-bungarotoxin, found in Bungarus multicinctus (Many-banded krait).